Here is a 195-residue protein sequence, read N- to C-terminus: MEDIKSLIAGVDEVGKGCLFGPVFAAAVILSKENEIELLNQGLKDSKKLSHRQRHNLVPLIKTNSIAWTIGQASAREIDVIGIRDATEKAMLRALEKFSSPPDLILVDGILPIRLWPGKQKTQVRGESHFASIAAASVLAKETRDELIKRLARKYNCYGLEKNKGYGTEIHRTNLIKEGATKLHRKSFISRLEIN.

One can recognise an RNase H type-2 domain in the interval 6–195 (SLIAGVDEVG…KSFISRLEIN (190 aa)). A divalent metal cation-binding residues include Asp12, Glu13, and Asp108.

It belongs to the RNase HII family. It depends on Mn(2+) as a cofactor. Requires Mg(2+) as cofactor.

It is found in the cytoplasm. It carries out the reaction Endonucleolytic cleavage to 5'-phosphomonoester.. Functionally, endonuclease that specifically degrades the RNA of RNA-DNA hybrids. This chain is Ribonuclease HII, found in Prochlorococcus marinus (strain NATL1A).